A 311-amino-acid polypeptide reads, in one-letter code: Oxygen-dependent coproporphyrinogen-III oxidase (311 aa).

Ser100 contacts substrate. The a divalent metal cation site is built by His104 and His114. His114 functions as the Proton donor in the catalytic mechanism. 116-118 provides a ligand contact to substrate; the sequence is NVR. The a divalent metal cation site is built by His153 and His183. The important for dimerization stretch occupies residues 248-283; that stretch reads YAEFNLVYDRGTLFGLQSGGRTESILMSLPPIVHWE. A substrate-binding site is contributed by 266–268; the sequence is GGR.

This sequence belongs to the aerobic coproporphyrinogen-III oxidase family. Homodimer. The cofactor is a divalent metal cation.

Its subcellular location is the cytoplasm. The catalysed reaction is coproporphyrinogen III + O2 + 2 H(+) = protoporphyrinogen IX + 2 CO2 + 2 H2O. It participates in porphyrin-containing compound metabolism; protoporphyrin-IX biosynthesis; protoporphyrinogen-IX from coproporphyrinogen-III (O2 route): step 1/1. Involved in the heme biosynthesis. Catalyzes the aerobic oxidative decarboxylation of propionate groups of rings A and B of coproporphyrinogen-III to yield the vinyl groups in protoporphyrinogen-IX. In Legionella pneumophila (strain Corby), this protein is Oxygen-dependent coproporphyrinogen-III oxidase.